A 172-amino-acid chain; its full sequence is Small ribosomal subunit protein uS5 (172 aa).

The S5 DRBM domain occupies 17–80 (LREKMISVNR…EQARRNMFKV (64 aa)).

Belongs to the universal ribosomal protein uS5 family. In terms of assembly, part of the 30S ribosomal subunit. Contacts proteins S4 and S8.

With S4 and S12 plays an important role in translational accuracy. Its function is as follows. Located at the back of the 30S subunit body where it stabilizes the conformation of the head with respect to the body. The protein is Small ribosomal subunit protein uS5 of Paraburkholderia xenovorans (strain LB400).